Reading from the N-terminus, the 215-residue chain is MRSFTTLNGLAAPMDRPNVDTDLIIPKQFLKSIQRTGFGANLFDELRYLDKGEPGRDNSNRPINPDFPLNFKRYEGASVLLARENFGCGSSREHAPWALDEYGFHCIIAPSFADIFFNNCFKNGILPIVLDEEIVESLFVEMYQTEGYRLVIDLPAQTVTTPSGNSYSFEVDEFRKHCLLKGLDDIGLTLQHADSITAYEAERAKRAPWLFAASE.

Belongs to the LeuD family. LeuD type 1 subfamily. Heterodimer of LeuC and LeuD.

The enzyme catalyses (2R,3S)-3-isopropylmalate = (2S)-2-isopropylmalate. It functions in the pathway amino-acid biosynthesis; L-leucine biosynthesis; L-leucine from 3-methyl-2-oxobutanoate: step 2/4. Catalyzes the isomerization between 2-isopropylmalate and 3-isopropylmalate, via the formation of 2-isopropylmaleate. This Saccharophagus degradans (strain 2-40 / ATCC 43961 / DSM 17024) protein is 3-isopropylmalate dehydratase small subunit.